A 134-amino-acid polypeptide reads, in one-letter code: Arginine decarboxylase proenzyme (134 aa).

Residue Ser82 is the Schiff-base intermediate with substrate; via pyruvic acid of the active site. Residue Ser82 is modified to Pyruvic acid (Ser); by autocatalysis. Catalysis depends on His87, which acts as the Proton acceptor; for processing activity. Cys102 functions as the Proton donor; for catalytic activity in the catalytic mechanism.

It belongs to the prokaryotic AdoMetDC family. Type 1 subfamily. Heterooctamer of four alpha and four beta chains arranged as a tetramer of alpha/beta heterodimers. Pyruvate serves as cofactor. In terms of processing, is synthesized initially as an inactive proenzyme. Formation of the active enzyme involves a self-maturation process in which the active site pyruvoyl group is generated from an internal serine residue via an autocatalytic post-translational modification. Two non-identical subunits are generated from the proenzyme in this reaction, and the pyruvate is formed at the N-terminus of the alpha chain, which is derived from the carboxyl end of the proenzyme. The post-translation cleavage follows an unusual pathway, termed non-hydrolytic serinolysis, in which the side chain hydroxyl group of the serine supplies its oxygen atom to form the C-terminus of the beta chain, while the remainder of the serine residue undergoes an oxidative deamination to produce ammonia and the pyruvoyl group blocking the N-terminus of the alpha chain.

It catalyses the reaction L-arginine + H(+) = agmatine + CO2. It participates in amine and polyamine biosynthesis; agmatine biosynthesis; agmatine from L-arginine: step 1/1. Its function is as follows. Specifically catalyzes the decarboxylation of L-arginine to agmatine. Has no S-adenosylmethionine decarboxylase (AdoMetDC) activity. The chain is Arginine decarboxylase proenzyme from Saccharolobus islandicus (strain M.16.4 / Kamchatka #3) (Sulfolobus islandicus).